Here is a 1188-residue protein sequence, read N- to C-terminus: DNA-directed RNA polymerase subunit beta (1188 aa).

The disordered stretch occupies residues 1149–1188 (ELRDLDEGEDDDVMHVDDLEKAREKQAQETPEVSENSEEK). Residues 1161 to 1175 (VMHVDDLEKAREKQA) show a composition bias toward basic and acidic residues.

It belongs to the RNA polymerase beta chain family. The RNAP catalytic core consists of 2 alpha, 1 beta, 1 beta' and 1 omega subunit. When a sigma factor is associated with the core the holoenzyme is formed, which can initiate transcription.

It catalyses the reaction RNA(n) + a ribonucleoside 5'-triphosphate = RNA(n+1) + diphosphate. In terms of biological role, DNA-dependent RNA polymerase catalyzes the transcription of DNA into RNA using the four ribonucleoside triphosphates as substrates. The chain is DNA-directed RNA polymerase subunit beta from Streptococcus uberis (strain ATCC BAA-854 / 0140J).